The chain runs to 567 residues: Adenine deaminase 2 (567 aa).

This sequence belongs to the metallo-dependent hydrolases superfamily. Adenine deaminase family. Mn(2+) is required as a cofactor.

It catalyses the reaction adenine + H2O + H(+) = hypoxanthine + NH4(+). The protein is Adenine deaminase 2 of Oenococcus oeni (strain ATCC BAA-331 / PSU-1).